The chain runs to 181 residues: Protein TrbB (181 aa).

Positions 1–22 (MSLTKSLLFTLLLSAAAVQAST) are cleaved as a signal peptide. A Thioredoxin domain is found at 37 to 172 (TQPAQPAAGT…FMARVDTVLQ (136 aa)).

It localises to the periplasm. The protein is Protein TrbB (trbB) of Escherichia coli (strain K12).